Here is a 182-residue protein sequence, read N- to C-terminus: CDP-diacylglycerol--glycerol-3-phosphate 3-phosphatidyltransferase (182 aa).

Residues 2 to 12 (QFNIPTLLTLF) lie on the Cytoplasmic side of the membrane. Residues 13 to 37 (RVILIPFFVLVFYLPVTWSPFAAAL) traverse the membrane as a helical segment. The Periplasmic portion of the chain corresponds to 38-60 (IFCVAAVTDWFDGFLARRWNQST). A helical transmembrane segment spans residues 61–81 (RFGAFLDPVADKVLVAIAMVL). Topologically, residues 82–86 (VTEHY) are cytoplasmic. Residues 87–107 (HSWWVTLPAATMIAREIIISA) traverse the membrane as a helical segment. At 108–145 (LREWMAELGKRSSVAVSWIGKVKTTAQMVALAWLLWRP) the chain is on the periplasmic side. The helical transmembrane segment at 146–168 (NIWVEYAGIALFFVAAVLTLWSM) threads the bilayer. Over 169–181 (LQYLSAARADLLD) the chain is Cytoplasmic.

The protein belongs to the CDP-alcohol phosphatidyltransferase class-I family.

The protein resides in the cell inner membrane. The enzyme catalyses a CDP-1,2-diacyl-sn-glycerol + sn-glycerol 3-phosphate = a 1,2-diacyl-sn-glycero-3-phospho-(1'-sn-glycero-3'-phosphate) + CMP + H(+). Its pathway is phospholipid metabolism; phosphatidylglycerol biosynthesis; phosphatidylglycerol from CDP-diacylglycerol: step 1/2. In terms of biological role, catalyzes the conversion of cytidine diphosphate diacylglycerol (CDP-DG) and glycerol 3-phosphate into phosphatidylglycerol. Essential for the synthesis of anionic phospholipids, thereby playing a role in balancing the ratio of zwitterionic and anionic phospholipids, which is thought to be important for normal membrane function. This chain is CDP-diacylglycerol--glycerol-3-phosphate 3-phosphatidyltransferase, found in Shigella sonnei (strain Ss046).